Here is a 593-residue protein sequence, read N- to C-terminus: V-type ATP synthase alpha chain (593 aa).

ATP is bound at residue 246–253 (GPFGAGKT).

This sequence belongs to the ATPase alpha/beta chains family.

The catalysed reaction is ATP + H2O + 4 H(+)(in) = ADP + phosphate + 5 H(+)(out). In terms of biological role, produces ATP from ADP in the presence of a proton gradient across the membrane. The V-type alpha chain is a catalytic subunit. This chain is V-type ATP synthase alpha chain, found in Protochlamydia amoebophila (strain UWE25).